Reading from the N-terminus, the 428-residue chain is D-alanine--D-alanine ligase (428 aa).

The 220-residue stretch at 205 to 424 folds into the ATP-grasp domain; that stretch reads KVVLDAAGIP…YTELITRLIE (220 aa). 237 to 299 lines the ATP pocket; the sequence is DAGLTYPLFV…EQGIDGREIE (63 aa). 3 residues coordinate Mg(2+): aspartate 378, glutamate 391, and asparagine 393.

The protein belongs to the D-alanine--D-alanine ligase family. The cofactor is Mg(2+). It depends on Mn(2+) as a cofactor.

The protein resides in the cytoplasm. It carries out the reaction 2 D-alanine + ATP = D-alanyl-D-alanine + ADP + phosphate + H(+). It functions in the pathway cell wall biogenesis; peptidoglycan biosynthesis. Cell wall formation. The polypeptide is D-alanine--D-alanine ligase (Bifidobacterium longum (strain NCC 2705)).